The primary structure comprises 593 residues: MLO-like protein 8 (593 aa).

Over 1 to 46 the chain is Extracellular; sequence MGIIDGSLLRRLICLCLWCLLGGGVTVVTAEDEKKVVHKQLNQTPT. The helical transmembrane segment at 47–67 threads the bilayer; sequence WAVAAVCTFFIVVSVLLEKLL. The Cytoplasmic portion of the chain corresponds to 68 to 92; the sequence is HKVGKVLWDRHKTALLDALEKIKAE. The helical transmembrane segment at 93 to 113 threads the bilayer; the sequence is LMVLGFISLLLTFGQTYILDI. Residues 114–181 are Extracellular-facing; it reads CIPSHVARTM…ISAEALHQLH (68 aa). The helical transmembrane segment at 182–202 threads the bilayer; the sequence is ILIFFLAIFHVLYSFLTMMLG. Topologically, residues 203 to 304 are cytoplasmic; sequence RLKIRGWKHW…IKRSLEDDFK (102 aa). Residues 305–325 traverse the membrane as a helical segment; sequence VVVGVSPVLWGSFVLFLLLNI. Asp-326 is a topological domain (extracellular). The helical transmembrane segment at 327–347 threads the bilayer; that stretch reads GFKMMFIGTAIPVIIILAVGT. At 348–393 the chain is on the cytoplasmic side; sequence KLQAIMTRMALGITDRHAVVQGMPLVQGNDEYFWFGRPHLILHLMH. A helical transmembrane segment spans residues 394–414; it reads FALFQNAFQITYFFWIWYSFG. The Extracellular segment spans residues 415–430; the sequence is SDSCYHPNFKIALVKV. A helical membrane pass occupies residues 431 to 451; sequence AIALGVLCLCSYITLPLYALV. Residues 452–593 lie on the Cytoplasmic side of the membrane; that stretch reads TQMGSRMKKS…APSNESSQDR (142 aa). A calmodulin-binding region spans residues 465-486; it reads EQTSKALKKWRMAVKKKKGVKA. The segment at 481 to 593 is disordered; the sequence is KKGVKATTKR…APSNESSQDR (113 aa). Positions 489–512 are enriched in low complexity; it reads KRLGGDGSASPTASTVRSTSSVRS. Residues 528–539 show a composition bias toward acidic residues; the sequence is LDPETSDLDTDN. Positions 567 to 579 are enriched in basic and acidic residues; that stretch reads TSRDTETDSKEFS.

The protein belongs to the MLO family.

Its subcellular location is the membrane. In terms of biological role, may be involved in modulation of pathogen defense and leaf cell death. Activity seems to be regulated by Ca(2+)-dependent calmodulin binding and seems not to require heterotrimeric G proteins. In Arabidopsis thaliana (Mouse-ear cress), this protein is MLO-like protein 8 (MLO8).